The chain runs to 349 residues: N-acetyltaurine hydrolase (349 aa).

A divalent metal cation-binding residues include His26, His28, Glu169, His201, His230, and Asp298.

This sequence belongs to the metallo-dependent hydrolases superfamily. Phosphotriesterase family. A divalent metal cation serves as cofactor.

It is found in the cytoplasm. The protein resides in the cytosol. The enzyme catalyses N-acetyltaurine + H2O = taurine + acetate. It catalyses the reaction N-propanoyltaurine + H2O = propanoate + taurine. The catalysed reaction is N-acetyl-L-methionine + H2O = L-methionine + acetate. It carries out the reaction N-acetyl-L-isoleucine + H2O = L-isoleucine + acetate. The enzyme catalyses N-acetyl-L-leucine + H2O = L-leucine + acetate. It catalyses the reaction N-acetyl-L-valine + H2O = L-valine + acetate. In terms of biological role, N-acetyltaurine hydrolase that regulates feeding by catalyzing the hydrolysis of N-acetyltaurine into taurine and acetate. N-acetyltaurine has anorexigenic and anti-obesity effects that are dependent on GFRAL receptor and GDF15. PTER also acts on other N-acetyl amino acids (Met, Ile, Leu, Val) and N-propionyltaurine, but at lower rates. This is N-acetyltaurine hydrolase (PTER) from Bos taurus (Bovine).